The chain runs to 404 residues: tRNA N6-adenosine threonylcarbamoyltransferase, mitochondrial (404 aa).

The transit peptide at 1 to 27 (MFQSCLPGALRSWSRGVFSTSTRPRLV) directs the protein to the mitochondrion. Residues His135 and His139 each coordinate a divalent metal cation. Residues 157 to 161 (LVSGG), Asp190, Gly210, Glu214, 317 to 318 (SN), and Thr345 contribute to the substrate site. An a divalent metal cation-binding site is contributed by Asp346.

The protein belongs to the KAE1 / TsaD family. In terms of assembly, monomer. The cofactor is a divalent metal cation.

It is found in the mitochondrion. The catalysed reaction is L-threonylcarbamoyladenylate + adenosine(37) in tRNA = N(6)-L-threonylcarbamoyladenosine(37) in tRNA + AMP + H(+). In terms of biological role, required for the formation of a threonylcarbamoyl group on adenosine at position 37 (t(6)A37) in mitochondrial tRNAs that read codons beginning with adenine. Probably involved in the transfer of the threonylcarbamoyl moiety of threonylcarbamoyl-AMP (TC-AMP) to the N6 group of A37. Involved in mitochondrial genome maintenance. The sequence is that of tRNA N6-adenosine threonylcarbamoyltransferase, mitochondrial from Danio rerio (Zebrafish).